We begin with the raw amino-acid sequence, 268 residues long: Early nodulin-20 (268 aa).

The first 24 residues, 1–24, serve as a signal peptide directing secretion; the sequence is MSSSSPILLMFIFSIWMLISYSES. One can recognise a Phytocyanin domain in the interval 25 to 129; sequence TDYLVGDSEN…GLKLAVVVMV (105 aa). N67 is a glycosylation site (N-linked (GlcNAc...) asparagine). C83 and C117 form a disulfide bridge. 2 stretches are compositionally biased toward pro residues: residues 134 to 145 and 160 to 185; these read SSPPPPPSPPTP and PSPP…TPIP. The segment at 134–253 is disordered; that stretch reads SSPPPPPSPP…SGSKGGGAGH (120 aa). Positions 199-235 are enriched in low complexity; sequence PSLSKSPSPSESPSLAPSPSDSVASLAPSSSPSDESP. Residue S243 is the site of GPI-anchor amidated serine attachment. A propeptide spans 244–268 (removed in mature form); it reads SGSKGGGAGHGFLEVSIAMMMFLIF.

Belongs to the early nodulin-like (ENODL) family.

It is found in the cell membrane. Its function is as follows. May act as a carbohydrate transporter. This Medicago truncatula (Barrel medic) protein is Early nodulin-20.